The following is a 997-amino-acid chain: Sarcoplasmic/endoplasmic reticulum calcium ATPase 2 (997 aa).

Residues 1–48 (MENAHTKTVEEVLGYFGVNESTGLSLEQVKKLKERWGSNELPAEEGKT) lie on the Cytoplasmic side of the membrane. Position 38 is a phosphoserine (Ser-38). The chain crosses the membrane as a helical span at residues 49-69 (LLELVIEQFEDLLVRILLLAA). Over 70–89 (CISFVLAWFEEGEETITAFV) the chain is Lumenal. Residues 90–110 (EPFVILLILVANAIVGVWQER) traverse the membrane as a helical segment. The Cytoplasmic segment spans residues 111-253 (NAENAIEALK…QERTPLQQKL (143 aa)). Residues 254-273 (DEFGEQLSKVISLICIAVWI) form a helical membrane-spanning segment. The Lumenal segment spans residues 274–295 (INIGHFNDPVHGGSWIRGAIYY). A 3'-nitrotyrosine mark is found at Tyr-294 and Tyr-295. A helical membrane pass occupies residues 296–313 (FKIAVALAVAAIPEGLPA). The Ca(2+) site is built by Val-304, Ala-305, Ile-307, and Glu-309. Residues 314 to 756 (VITTCLALGT…EEGRAIYNNM (443 aa)) lie on the Cytoplasmic side of the membrane. Asp-351 functions as the 4-aspartylphosphate intermediate in the catalytic mechanism. Residues Asp-351 and Thr-353 each coordinate Mg(2+). Residue Thr-353 participates in ATP binding. Position 441 is a phosphothreonine (Thr-441). Glu-442, Arg-489, and Lys-514 together coordinate ATP. Phosphoserine is present on Ser-531. Arg-559 lines the ATP pocket. The tract at residues 575 to 594 (MNLEDSANFIKYETNLTFVG) is interaction with HAX1. Ser-580 is modified (phosphoserine). The ATP site is built by Thr-624, Gly-625, and Asp-626. Phosphoserine occurs at positions 661 and 663. Positions 677 and 683 each coordinate ATP. Asp-702 is a binding site for Mg(2+). Asn-705 serves as a coordination point for ATP. Residues 757 to 776 (KQFIRYLISSNVGEVVCIFL) traverse the membrane as a helical segment. Residues Asn-767 and Glu-770 each contribute to the Ca(2+) site. The Lumenal segment spans residues 777–786 (TAALGFPEAL). The chain crosses the membrane as a helical span at residues 787 to 807 (IPVQLLWVNLVTDGLPATALG). An interaction with PLN region spans residues 787 to 807 (IPVQLLWVNLVTDGLPATALG). An interaction with TMEM64 and PDIA3 region spans residues 788–997 (PVQLLWVNLV…RNYLEPAILE (210 aa)). The Ca(2+) site is built by Asn-795, Thr-798, and Asp-799. Residues 808-827 (FNPPDLDIMNKPPRNPKEPL) lie on the Cytoplasmic side of the membrane. The chain crosses the membrane as a helical span at residues 828 to 850 (ISGWLFFRYLAIGCYVGAATVGA). Topologically, residues 851 to 896 (AAWWFIAADGGPRVSFYQLSHFLQCKDDNPDFEGVDCAIFESPYPM) are lumenal. Residues Cys-875 and Cys-887 are joined by a disulfide bond. A helical membrane pass occupies residues 897–916 (TMALSVLVTIEMCNALNSLS). A Ca(2+)-binding site is contributed by Glu-907. Residues 917–929 (ENQSLLRMPPWEN) are Cytoplasmic-facing. The chain crosses the membrane as a helical span at residues 930–948 (IWLVGSICLSMSLHFLILY). The tract at residues 931-942 (WLVGSICLSMSL) is interaction with PLN. The Lumenal segment spans residues 949 to 963 (VEPLPLIFQITPLNL). Residues 964 to 984 (TQWLMVLKISLPVILMDETLK) traverse the membrane as a helical segment. Over 985–997 (FVARNYLEPAILE) the chain is Cytoplasmic.

It belongs to the cation transport ATPase (P-type) (TC 3.A.3) family. Type IIA subfamily. As to quaternary structure, interacts with sarcolipin (SLN); the interaction inhibits ATP2A2 Ca(2+) affinity. Interacts with phospholamban (PLN); the interaction inhibits ATP2A2 Ca(2+) affinity. Interacts with myoregulin (MRLN). Interacts with ARLN and ERLN; the interactions inhibit ATP2A2 Ca(2+) affinity. Interacts with STRIT1/DWORF; the interaction results in activation of ATP2A2. Interacts with the monomeric forms of SLN, PLN, ARLN, ERLN and STRI1/DWORF. Interacts with HAX1. Interacts with S100A8 and S100A9. Interacts with SLC35G1 and STIM1. Interacts with TMEM203. Interacts with TMEM64 and PDIA3. Interacts with TMX1. Interacts with TMX2. Interacts with VMP1; VMP1 competes with PLN and SLN to prevent them from forming an inhibitory complex with ATP2A2. Interacts with ULK1. Interacts with S100A1 in a Ca(2+)-dependent manner. Interacts with TUNAR. Interacts with FLVCR2; this interaction occurs in the absence of heme and promotes ATP2A2 proteasomal degradation; this complex is dissociated upon heme binding. Interacts with FNIP1. In terms of assembly, interacts with TRAM2 (via C-terminus). Requires Mg(2+) as cofactor. Nitrated under oxidative stress. Nitration on the two tyrosine residues inhibits catalytic activity. Post-translationally, serotonylated on Gln residues by TGM2 in response to hypoxia, leading to its inactivation. As to expression, isoform 1 is expressed in the heart.

The protein localises to the endoplasmic reticulum membrane. Its subcellular location is the sarcoplasmic reticulum membrane. The catalysed reaction is Ca(2+)(in) + ATP + H2O = Ca(2+)(out) + ADP + phosphate + H(+). With respect to regulation, has different conformational states with differential Ca2+ affinity. The E1 conformational state (active form) shows high Ca(2+) affinity, while the E2 state exhibits low Ca(2+) affinity. Binding of ATP allosterically increases its affinity for subsequent binding of Ca2+. Reversibly inhibited by phospholamban (PLN) at low calcium concentrations. PLN inhibits ATP2A2 Ca(2+) affinity by disrupting its allosteric activation by ATP. Inhibited by sarcolipin (SLN) and myoregulin (MRLN). The inhibition is blocked by VMP1. Enhanced by STRIT1/DWORF; STRIT1 increases activity by displacing sarcolipin (SLN), phospholamban (PLN) and myoregulin (MRLN). Stabilizes SERCA2 in its E2 state. This magnesium-dependent enzyme catalyzes the hydrolysis of ATP coupled with the translocation of calcium from the cytosol to the sarcoplasmic reticulum lumen. Involved in autophagy in response to starvation. Upon interaction with VMP1 and activation, controls ER-isolation membrane contacts for autophagosome formation. Also modulates ER contacts with lipid droplets, mitochondria and endosomes. In coordination with FLVCR2 mediates heme-stimulated switching from mitochondrial ATP synthesis to thermogenesis. Its function is as follows. Involved in the regulation of the contraction/relaxation cycle. Acts as a regulator of TNFSF11-mediated Ca(2+) signaling pathways via its interaction with TMEM64 which is critical for the TNFSF11-induced CREB1 activation and mitochondrial ROS generation necessary for proper osteoclast generation. Association between TMEM64 and SERCA2 in the ER leads to cytosolic Ca(2+) spiking for activation of NFATC1 and production of mitochondrial ROS, thereby triggering Ca(2+) signaling cascades that promote osteoclast differentiation and activation. The sequence is that of Sarcoplasmic/endoplasmic reticulum calcium ATPase 2 (ATP2A2) from Felis catus (Cat).